The primary structure comprises 98 residues: Large ribosomal subunit protein bL27 (98 aa).

The propeptide occupies 1-10; that stretch reads MELKMNLQLF. The interval 11 to 30 is disordered; the sequence is AQKKGTGSSKNGRDSISKRL.

It belongs to the bacterial ribosomal protein bL27 family. In terms of processing, the N-terminus is cleaved by ribosomal processing cysteine protease Prp.

The polypeptide is Large ribosomal subunit protein bL27 (Natranaerobius thermophilus (strain ATCC BAA-1301 / DSM 18059 / JW/NM-WN-LF)).